We begin with the raw amino-acid sequence, 210 residues long: Putative protein-lysine deacylase ABHD14B (210 aa).

A2 carries the N-acetylalanine modification. The residue at position 91 (S91) is a Phosphoserine. Residues S111, D162, and H188 each act as charge relay system in the active site.

This sequence belongs to the AB hydrolase superfamily. ABHD14 family. May interact with TAF1. As to expression, ubiquitous. Detected in spleen, thymus, prostate, testis, ovary, small intestine, colon, peripheral blood leukocyte, heart, placenta, lung, liver, skeletal muscle, pancreas and kidney.

Its subcellular location is the cytoplasm. It localises to the nucleus. It carries out the reaction L-lysyl-[protein] + acetyl-CoA = N(6)-acetyl-L-lysyl-[protein] + CoA + H(+). In terms of biological role, acts as an atypical protein-lysine deacetylase in vitro. Catalyzes the deacetylation of lysine residues using CoA as substrate, generating acetyl-CoA and the free amine of protein-lysine residues. Additional experiments are however required to confirm the protein-lysine deacetylase activity in vivo. Has hydrolase activity towards various surrogate p-nitrophenyl (pNp) substrates, such as pNp-butyrate, pNp-acetate and pNp-octanoate in vitro, with a strong preference for pNp-acetate. May activate transcription. The protein is Putative protein-lysine deacylase ABHD14B of Homo sapiens (Human).